An 840-amino-acid chain; its full sequence is Phosphatidylinositol-3-phosphatase myotubularin-1 (840 aa).

The disordered stretch occupies residues 1 to 28 (MTPPRPPSGRVRSLRDYSSESEKMDGTG). Residues 13-25 (SLRDYSSESEKMD) show a composition bias toward basic and acidic residues. The 68-residue stretch at 45–112 (GSFSNLSCLL…ATIEKFNKMV (68 aa)) folds into the GRAM domain. A Myotubularin phosphatase domain is found at 199–650 (GKSSIRASMD…LAPTLWPQFH (452 aa)). Substrate contacts are provided by residues 332–335 (NGAM), 357–358 (NI), 443–449 (CSDGWDR), and Arg-489. The active-site Phosphocysteine intermediate is Cys-443. The segment at 506–535 (QSSSAGSFPSSPVRQSSGSAASQSSSSSHG) is disordered. Over residues 507 to 535 (SSSAGSFPSSPVRQSSGSAASQSSSSSHG) the composition is skewed to low complexity. The stretch at 666 to 734 (VQCRAMTVKY…AALTRAVQSL (69 aa)) forms a coiled coil. Positions 745 to 771 (VEDDPRSSLENNPRRRNRHGNNSDVSV) are disordered.

The protein belongs to the protein-tyrosine phosphatase family. Non-receptor class myotubularin subfamily. Mostly expressed in siliques and leaves (including hydathodes), and, to a lower extent, in flowers and roots.

Its subcellular location is the cytoplasm. It localises to the endosome membrane. It catalyses the reaction a 1,2-diacyl-sn-glycero-3-phospho-(1D-myo-inositol-3-phosphate) + H2O = a 1,2-diacyl-sn-glycero-3-phospho-(1D-myo-inositol) + phosphate. The enzyme catalyses a 1,2-diacyl-sn-glycero-3-phospho-(1D-myo-inositol-3,5-bisphosphate) + H2O = a 1,2-diacyl-sn-glycero-3-phospho-(1D-myo-inositol-5-phosphate) + phosphate. Its function is as follows. Phosphatase with phosphoinositide 3'-phosphatase activity that can use phosphatidylinositol-3-phosphate (PtdIns3P) and phosphatidylinositol-3,5-diphosphate (PtdIns3,5P(2)) as substrates and produces phosphatidylinositol-5-phosphate (PtdIns5P); participates in pathway(s) that transfer gene regulatory signals to the nucleus. Required for recovery after water deprivation, via the accumulation of PtdIns5P upon dehydration; high PtdIns5P levels mediate ATX1 cytoplasmic localization, thus down-regulating the expression of ATX1-dependent genes. Confers sensitivity to soil-water-deficit stress. The sequence is that of Phosphatidylinositol-3-phosphatase myotubularin-1 (MTM1) from Arabidopsis thaliana (Mouse-ear cress).